A 393-amino-acid polypeptide reads, in one-letter code: Formate-dependent phosphoribosylglycinamide formyltransferase (393 aa).

Residues 22–23 and Glu82 contribute to the N(1)-(5-phospho-beta-D-ribosyl)glycinamide site; that span reads EL. Residues Arg114, Lys155, 160 to 165, 195 to 198, and Glu203 each bind ATP; these read SSGHGQ and EGFV. Residues 119–308 form the ATP-grasp domain; the sequence is RLAAEKLKLP…EFALHARAIL (190 aa). 2 residues coordinate Mg(2+): Glu267 and Glu279. N(1)-(5-phospho-beta-D-ribosyl)glycinamide-binding positions include Asp286, Lys356, and 363 to 364; that span reads RR.

The protein belongs to the PurK/PurT family. Homodimer.

It carries out the reaction N(1)-(5-phospho-beta-D-ribosyl)glycinamide + formate + ATP = N(2)-formyl-N(1)-(5-phospho-beta-D-ribosyl)glycinamide + ADP + phosphate + H(+). It functions in the pathway purine metabolism; IMP biosynthesis via de novo pathway; N(2)-formyl-N(1)-(5-phospho-D-ribosyl)glycinamide from N(1)-(5-phospho-D-ribosyl)glycinamide (formate route): step 1/1. Its function is as follows. Involved in the de novo purine biosynthesis. Catalyzes the transfer of formate to 5-phospho-ribosyl-glycinamide (GAR), producing 5-phospho-ribosyl-N-formylglycinamide (FGAR). Formate is provided by PurU via hydrolysis of 10-formyl-tetrahydrofolate. This is Formate-dependent phosphoribosylglycinamide formyltransferase from Histophilus somni (strain 129Pt) (Haemophilus somnus).